A 485-amino-acid polypeptide reads, in one-letter code: MGAVMLQGTGSDVGKSVLVAGLCRAFVRRGLAVRPFKPQNMSNNAAVTIDGGEIGRAQALQAIACRVEPHSDMNPVLLKPQADRTSQLVVHGRVRGTLGSADFREARRPLLDEVLASYRRLREQCDIVVVEGAGSPAEINLRAGDIANMGFARAAGVPVVLVGDIDRGGVIAAVVGTRAVLDPADAAMIHGFLINKFRGDPALFEDGYRQIEALSGWRGFGVVPWLAATARLPSEDAVILERRGGPAEGRVLVACPILPRISNFDDLDPLKLEPGVELVMVPPGRPIPAEAALIVLPGSKATIADLAALRAEGWDIDIRAHHRRGRAILGLCGGYQMLGRRVADPEGIEGPPGAVDGLGLLDVETRLSPAKTLRRVEGEALDARFDGYEMHVGETDGPGRARPFARFDDGRTDGAIDPGGTVMGSYVHGLLANADLRRALLARLGIEGGGRDYAASVDAALDAIAEEIERHVDVDALVALAQAGG.

One can recognise a GATase cobBQ-type domain in the interval 250 to 436 (RVLVACPILP…VHGLLANADL (187 aa)). The active-site Nucleophile is the Cys332. The active site involves His428.

This sequence belongs to the CobB/CobQ family. CobQ subfamily.

Its pathway is cofactor biosynthesis; adenosylcobalamin biosynthesis. Functionally, catalyzes amidations at positions B, D, E, and G on adenosylcobyrinic A,C-diamide. NH(2) groups are provided by glutamine, and one molecule of ATP is hydrogenolyzed for each amidation. The sequence is that of Cobyric acid synthase from Rhizorhabdus wittichii (strain DSM 6014 / CCUG 31198 / JCM 15750 / NBRC 105917 / EY 4224 / RW1) (Sphingomonas wittichii).